Consider the following 496-residue polypeptide: NADH-quinone oxidoreductase subunit N (496 aa).

The next 14 helical transmembrane spans lie at 8-28 (LLSTEIIMAVLGLGLFAVGLI), 37-57 (MFPLTLFALLGTLAYAVYDFF), 73-93 (QFAGFFKILFLVAALLVVLST), 110-130 (LLLLAALGMMLMAGAGDLLTM), 131-151 (YVGLELMTITFYILVAYHPND), 162-182 (LVLGAASSAVLLYGISLIYGL), 203-223 (TILATVMMLAGFGFKISLVPF), 235-255 (PAPITAFLATASKAAGFAALV), 271-291 (GLILLLVLAAITMIIGNLMAF), 300-320 (MAYSGIAQAGYIIVGVIAVSI), 341-361 (GVLFYLMIYVFANLGAFAVIT), 386-406 (AAVLTLSVLSLAGIPPLAGFV), 421-441 (VWIAVIGFVMSMISVYYYLSI), and 464-484 (FGMIFSMIVTIVLGIYPTPLA).

This sequence belongs to the complex I subunit 2 family. As to quaternary structure, NDH-1 is composed of 14 different subunits. Subunits NuoA, H, J, K, L, M, N constitute the membrane sector of the complex.

The protein localises to the cell membrane. It catalyses the reaction a quinone + NADH + 5 H(+)(in) = a quinol + NAD(+) + 4 H(+)(out). NDH-1 shuttles electrons from NADH, via FMN and iron-sulfur (Fe-S) centers, to quinones in the respiratory chain. The immediate electron acceptor for the enzyme in this species is believed to be a menaquinone. Couples the redox reaction to proton translocation (for every two electrons transferred, four hydrogen ions are translocated across the cytoplasmic membrane), and thus conserves the redox energy in a proton gradient. This Desulfitobacterium hafniense (strain DSM 10664 / DCB-2) protein is NADH-quinone oxidoreductase subunit N.